The following is a 134-amino-acid chain: Transcription antitermination protein NusB (134 aa).

This sequence belongs to the NusB family.

In terms of biological role, involved in transcription antitermination. Required for transcription of ribosomal RNA (rRNA) genes. Binds specifically to the boxA antiterminator sequence of the ribosomal RNA (rrn) operons. The protein is Transcription antitermination protein NusB of Shewanella woodyi (strain ATCC 51908 / MS32).